We begin with the raw amino-acid sequence, 42 residues long: Beta-defensin 13 (42 aa).

3 disulfides stabilise this stretch: Cys-9–Cys-38, Cys-16–Cys-31, and Cys-21–Cys-39.

It belongs to the beta-defensin family. As to expression, neutrophilic granules.

It localises to the secreted. Has bactericidal activity. Active against E.coli ML35 and S.aureus 502A. The protein is Beta-defensin 13 (DEFB13) of Bos taurus (Bovine).